Here is a 411-residue protein sequence, read N- to C-terminus: uncharacterized protein (411 aa).

Residues Leu32–Pro108 form a disordered region.

This is an uncharacterized protein from Ictalurid herpesvirus 1 (strain Auburn) (IcHV-1).